The primary structure comprises 194 residues: Peptidyl-tRNA hydrolase (194 aa).

Tyr17 is a binding site for tRNA. Residue His22 is the Proton acceptor of the active site. Phe68, Asn70, and Asn116 together coordinate tRNA.

It belongs to the PTH family. Monomer.

It is found in the cytoplasm. It catalyses the reaction an N-acyl-L-alpha-aminoacyl-tRNA + H2O = an N-acyl-L-amino acid + a tRNA + H(+). Functionally, hydrolyzes ribosome-free peptidyl-tRNAs (with 1 or more amino acids incorporated), which drop off the ribosome during protein synthesis, or as a result of ribosome stalling. In terms of biological role, catalyzes the release of premature peptidyl moieties from peptidyl-tRNA molecules trapped in stalled 50S ribosomal subunits, and thus maintains levels of free tRNAs and 50S ribosomes. This Glaesserella parasuis serovar 5 (strain SH0165) (Haemophilus parasuis) protein is Peptidyl-tRNA hydrolase.